The following is a 160-amino-acid chain: Transcription elongation factor GreA (160 aa).

Positions 50-70 (AAREQQSFNEGRIQELEAKLS) form a coiled coil.

Belongs to the GreA/GreB family.

Functionally, necessary for efficient RNA polymerase transcription elongation past template-encoded arresting sites. The arresting sites in DNA have the property of trapping a certain fraction of elongating RNA polymerases that pass through, resulting in locked ternary complexes. Cleavage of the nascent transcript by cleavage factors such as GreA or GreB allows the resumption of elongation from the new 3'terminus. GreA releases sequences of 2 to 3 nucleotides. This Legionella pneumophila (strain Corby) protein is Transcription elongation factor GreA.